The sequence spans 497 residues: Guanosine-5'-triphosphate,3'-diphosphate pyrophosphatase (497 aa).

Belongs to the GppA/Ppx family. GppA subfamily.

It catalyses the reaction guanosine 3'-diphosphate 5'-triphosphate + H2O = guanosine 3',5'-bis(diphosphate) + phosphate + H(+). Its pathway is purine metabolism; ppGpp biosynthesis; ppGpp from GTP: step 2/2. Catalyzes the conversion of pppGpp to ppGpp. Guanosine pentaphosphate (pppGpp) is a cytoplasmic signaling molecule which together with ppGpp controls the 'stringent response', an adaptive process that allows bacteria to respond to amino acid starvation, resulting in the coordinated regulation of numerous cellular activities. The protein is Guanosine-5'-triphosphate,3'-diphosphate pyrophosphatase of Aliivibrio fischeri (strain ATCC 700601 / ES114) (Vibrio fischeri).